The primary structure comprises 396 residues: MAKEKFERTKPHVNVGTIGHVDHGKTTLTAAITTILSKKFGGAAKKYDEIDSSPEEKARGITINTAHVEYETASRHYAHVDCPGHADYVKNMITGAAQMDGAILVVSSADGPMPQTREHILLARQVGVPYIIVYMNKADMVDDAELLELVEMEVRELLSKYDFPGDDTPIIVGSALKALEGDQSDIGEPSIIKLAEALDTYIPEPERAIDKPFLMPVEDVFSISGRGTVVTGRVERGVIKVGEEIEIVGITPTVKTTCTGVEMFRKLLDQGQAGDNVGVLLRGTKREEVQRGQVLAKPGSIKPHTKFSAEIYVLSKDEGGRHTPFFNGYRPQFYFRTTDVTGSIELPAGTEMVMPGDNVSIKVSLIQPIAMDEGLRFAIREGGRTVGAGVVAKIEE.

One can recognise a tr-type G domain in the interval 10 to 206; the sequence is KPHVNVGTIG…ALDTYIPEPE (197 aa). The tract at residues 19 to 26 is G1; sequence GHVDHGKT. A GTP-binding site is contributed by 19 to 26; that stretch reads GHVDHGKT. Residue Thr26 coordinates Mg(2+). A G2 region spans residues 60–64; sequence GITIN. The tract at residues 81–84 is G3; that stretch reads DCPG. GTP contacts are provided by residues 81-85 and 136-139; these read DCPGH and NKAD. The interval 136 to 139 is G4; the sequence is NKAD. The segment at 174 to 176 is G5; the sequence is SAL.

The protein belongs to the TRAFAC class translation factor GTPase superfamily. Classic translation factor GTPase family. EF-Tu/EF-1A subfamily. In terms of assembly, monomer.

The protein resides in the cytoplasm. It carries out the reaction GTP + H2O = GDP + phosphate + H(+). Functionally, GTP hydrolase that promotes the GTP-dependent binding of aminoacyl-tRNA to the A-site of ribosomes during protein biosynthesis. This is Elongation factor Tu from Thiobacillus denitrificans (strain ATCC 25259 / T1).